Here is a 548-residue protein sequence, read N- to C-terminus: CTP synthase (548 aa).

Residues 1 to 276 are amidoligase domain; it reads MPTELTDYDP…DQYVMEQLGL (276 aa). Ser-25 serves as a coordination point for CTP. Residue Ser-25 coordinates UTP. ATP is bound at residue 26–31; it reads GLGKGI. An L-glutamine-binding site is contributed by Tyr-66. Asp-83 serves as a coordination point for ATP. Residues Asp-83 and Glu-151 each contribute to the Mg(2+) site. CTP contacts are provided by residues 158–160, 197–202, and Lys-233; these read DIE and KTKPTQ. UTP-binding positions include 197–202 and Lys-233; that span reads KTKPTQ. One can recognise a Glutamine amidotransferase type-1 domain in the interval 303–541; sequence DIALVGKYAM…VETILETTDT (239 aa). Gly-363 contributes to the L-glutamine binding site. The active-site Nucleophile; for glutamine hydrolysis is the Cys-390. Residues 391-394, Glu-414, and Arg-471 each bind L-glutamine; that span reads LGFQ. Catalysis depends on residues His-514 and Glu-516.

It belongs to the CTP synthase family. In terms of assembly, homotetramer.

The catalysed reaction is UTP + L-glutamine + ATP + H2O = CTP + L-glutamate + ADP + phosphate + 2 H(+). It carries out the reaction L-glutamine + H2O = L-glutamate + NH4(+). It catalyses the reaction UTP + NH4(+) + ATP = CTP + ADP + phosphate + 2 H(+). The protein operates within pyrimidine metabolism; CTP biosynthesis via de novo pathway; CTP from UDP: step 2/2. Allosterically activated by GTP, when glutamine is the substrate; GTP has no effect on the reaction when ammonia is the substrate. The allosteric effector GTP functions by stabilizing the protein conformation that binds the tetrahedral intermediate(s) formed during glutamine hydrolysis. Inhibited by the product CTP, via allosteric rather than competitive inhibition. Catalyzes the ATP-dependent amination of UTP to CTP with either L-glutamine or ammonia as the source of nitrogen. Regulates intracellular CTP levels through interactions with the four ribonucleotide triphosphates. In Natronomonas pharaonis (strain ATCC 35678 / DSM 2160 / CIP 103997 / JCM 8858 / NBRC 14720 / NCIMB 2260 / Gabara) (Halobacterium pharaonis), this protein is CTP synthase.